A 360-amino-acid chain; its full sequence is Histidinol-phosphate aminotransferase 2 (360 aa).

N6-(pyridoxal phosphate)lysine is present on Lys218.

Belongs to the class-II pyridoxal-phosphate-dependent aminotransferase family. Histidinol-phosphate aminotransferase subfamily. In terms of assembly, homodimer. Pyridoxal 5'-phosphate serves as cofactor.

It carries out the reaction L-histidinol phosphate + 2-oxoglutarate = 3-(imidazol-4-yl)-2-oxopropyl phosphate + L-glutamate. The protein operates within amino-acid biosynthesis; L-histidine biosynthesis; L-histidine from 5-phospho-alpha-D-ribose 1-diphosphate: step 7/9. This is Histidinol-phosphate aminotransferase 2 from Nitrosococcus oceani (strain ATCC 19707 / BCRC 17464 / JCM 30415 / NCIMB 11848 / C-107).